Consider the following 688-residue polypeptide: PTS system glucoside-specific EIICBA component (688 aa).

In terms of domain architecture, PTS EIIC type-1 spans 3 to 427 (KKLFGQLQRI…FKLKTPGRED (425 aa)). 10 helical membrane passes run 12 to 32 (IGKA…LLAF), 81 to 101 (LGLA…YLIM), 137 to 157 (LVLG…MGAL), 182 to 202 (FVPI…SFAW), 223 to 243 (LTTF…LHHI), 284 to 304 (AFTT…AFAI), 315 to 335 (IVGG…ITEP), 340 to 360 (FLFV…TSFL), 364 to 384 (LLGV…ILYG), and 395 to 415 (LVIP…DFAI). The 82-residue stretch at 438–519 (AKLPFDVLDA…AKIMSGEITK (82 aa)) folds into the PTS EIIB type-1 domain. The active-site Phosphocysteine intermediate; for EIIB activity is cysteine 460. A PTS EIIA type-1 domain is found at 560–664 (DQVFAGKMMG…SIVTPMIITN (105 aa)). Histidine 612 serves as the catalytic Tele-phosphohistidine intermediate; for EIIA activity.

The protein resides in the cell membrane. The phosphoenolpyruvate-dependent sugar phosphotransferase system (sugar PTS), a major carbohydrate active -transport system, catalyzes the phosphorylation of incoming sugar substrates concomitantly with their translocation across the cell membrane. This system is involved in alpha- and beta-glucoside transport. This Staphylococcus aureus (strain MRSA252) protein is PTS system glucoside-specific EIICBA component (glcB).